We begin with the raw amino-acid sequence, 482 residues long: UDP-N-acetylmuramoyl-L-alanyl-D-glutamate--2,6-diaminopimelate ligase (482 aa).

Residue serine 24 coordinates UDP-N-acetyl-alpha-D-muramoyl-L-alanyl-D-glutamate. Residue glycine 105–threonine 111 coordinates ATP. UDP-N-acetyl-alpha-D-muramoyl-L-alanyl-D-glutamate-binding positions include threonine 147–threonine 148, serine 174, glutamine 180, and arginine 182. An N6-carboxylysine modification is found at lysine 214. Residues arginine 378, aspartate 402–arginine 405, glycine 453, and glutamate 457 each bind meso-2,6-diaminopimelate. A Meso-diaminopimelate recognition motif motif is present at residues aspartate 402–arginine 405.

This sequence belongs to the MurCDEF family. MurE subfamily. It depends on Mg(2+) as a cofactor. Post-translationally, carboxylation is probably crucial for Mg(2+) binding and, consequently, for the gamma-phosphate positioning of ATP.

It is found in the cytoplasm. It catalyses the reaction UDP-N-acetyl-alpha-D-muramoyl-L-alanyl-D-glutamate + meso-2,6-diaminopimelate + ATP = UDP-N-acetyl-alpha-D-muramoyl-L-alanyl-gamma-D-glutamyl-meso-2,6-diaminopimelate + ADP + phosphate + H(+). Its pathway is cell wall biogenesis; peptidoglycan biosynthesis. Catalyzes the addition of meso-diaminopimelic acid to the nucleotide precursor UDP-N-acetylmuramoyl-L-alanyl-D-glutamate (UMAG) in the biosynthesis of bacterial cell-wall peptidoglycan. This Lawsonia intracellularis (strain PHE/MN1-00) protein is UDP-N-acetylmuramoyl-L-alanyl-D-glutamate--2,6-diaminopimelate ligase.